The sequence spans 87 residues: Small ribosomal subunit protein uS17 (87 aa).

The protein belongs to the universal ribosomal protein uS17 family. As to quaternary structure, part of the 30S ribosomal subunit.

In terms of biological role, one of the primary rRNA binding proteins, it binds specifically to the 5'-end of 16S ribosomal RNA. This is Small ribosomal subunit protein uS17 from Bacillus subtilis (strain 168).